A 229-amino-acid chain; its full sequence is Stage III sporulation protein AG (229 aa).

The helical transmembrane segment at 30-50 (YHYFLFVFVLGVSFMLVSQLF) threads the bilayer. Disordered regions lie at residues 64–93 (AVSS…KDSI) and 136–159 (SNKN…DQSS). A compositionally biased stretch (basic and acidic residues) spans 71–93 (ADSKEKTAEVFKASKSDKPKDSI).

Its subcellular location is the cell membrane. The chain is Stage III sporulation protein AG (spoIIIAG) from Bacillus subtilis (strain 168).